The sequence spans 293 residues: DOMON domain-containing protein FRRS1L (293 aa).

Positions M1–A28 are cleaved as a signal peptide. The disordered stretch occupies residues S29–D60. Over residues A46 to D60 the composition is skewed to basic and acidic residues. In terms of domain architecture, DOMON spans C119–A234. Residues T271–G291 traverse the membrane as a helical segment.

Component of the outer core of AMPAR complex. AMPAR complex consists of an inner core made of 4 pore-forming GluA/GRIA proteins (GRIA1, GRIA2, GRIA3 and GRIA4) and 4 major auxiliary subunits arranged in a twofold symmetry. One of the two pairs of distinct binding sites is occupied either by CNIH2, CNIH3 or CACNG2, CACNG3. The other harbors CACNG2, CACNG3, CACNG4, CACNG8 or GSG1L. This inner core of AMPAR complex is complemented by outer core constituents binding directly to the GluA/GRIA proteins at sites distinct from the interaction sites of the inner core constituents. Outer core constituents include at least PRRT1, PRRT2, CKAMP44/SHISA9, FRRS1L and NRN1. The proteins of the inner and outer core serve as a platform for other, more peripherally associated AMPAR constituents. Alone or in combination, these auxiliary subunits control the gating and pharmacology of the AMPAR complex and profoundly impact their biogenesis and protein processing. Expressed in the brain (at protein level). In embryos expression is evident in the ventral forebrain, but a lower level is seen in the remainder of the embryos. In the adult brain, expressed in the cortex, cerebellum, hippocampus and basal ganglia.

It is found in the cell membrane. Its subcellular location is the synapse. In terms of biological role, important modulator of glutamate signaling pathway. This chain is DOMON domain-containing protein FRRS1L (Frrs1l), found in Mus musculus (Mouse).